The following is a 776-amino-acid chain: GATOR2 complex protein Wdr24 (776 aa).

6 WD repeats span residues 63-103 (NLSY…RQKQ), 109-149 (EHER…SINT), 152-192 (CNSE…KCMV), 196-235 (AHYG…GLEH), 238-280 (HTIA…IPFA), and 284-326 (EHTN…ALKA). The disordered stretch occupies residues 466-490 (HRSSFSNQKNPMNSRRATQVASDWP). The span at 469–490 (SFSNQKNPMNSRRATQVASDWP) shows a compositional bias: polar residues. The segment at 703–726 (NCGECGRPMGGKVGWYCDKCKSMQ) adopts a C4-type zinc-finger fold. Residues Cys-704, Cys-707, Cys-719, Cys-722, Cys-730, Cys-733, Cys-744, Cys-747, His-749, His-752, His-755, Cys-766, Cys-769, His-771, and Cys-773 each contribute to the Zn(2+) site. Residues 728 to 776 (AKCCVCGLIVRGVYAWCQGCSHGGHIEHLQKYFAKHSKCPKCGHLCAYS) form an RING-type; atypical zinc finger.

It belongs to the WD repeat WDR24 family. Component of the GATOR complex consisting of mio, Nup44A/Seh1, Im11, Nplr3, Nplr2, Wdr24, Wdr59 and Sec13. Within the GATOR complex, probable component of the GATOR2 subcomplex which is likely composed of mio, Nup44A/Seh1, Wdr24, Wdr59 and Sec13. Interacts with Nup44A/Seh1. Interacts with mio. Interacts with Nplr3. The GATOR2 complex associates with unmet in the absence of S-adenosyl-L-methionine; the mio-Wdr24-Nup44A subcomplex is essential and sufficient for this interaction while Wdr59 and Sec13 are dispensable. This association acts as a nutrient sensor to inhibit mTORC1 signaling in the absence of methionine.

It localises to the lysosome. It is found in the cytoplasmic vesicle. Its subcellular location is the autophagosome. It carries out the reaction S-ubiquitinyl-[E2 ubiquitin-conjugating enzyme]-L-cysteine + [acceptor protein]-L-lysine = [E2 ubiquitin-conjugating enzyme]-L-cysteine + N(6)-ubiquitinyl-[acceptor protein]-L-lysine.. It functions in the pathway protein modification; protein ubiquitination. Its function is as follows. An essential component of the GATOR subcomplex GATOR2 which functions as an activator of the amino acid-sensing branch of the mTORC1 signaling pathway. The two GATOR subcomplexes, GATOR1 and GATOR2, regulate the mTORC1 pathway in order to mediate metabolic homeostasis, female gametogenesis and the response to amino acid limitation and complete starvation. GATOR2 activates the mTORC1 signaling pathway through the inhibition of the GATOR1 subcomplex, controlling the switch to cell proliferation and growth under nutrient replete conditions and during female oocyte development. GATOR2 probably acts as an E3 ubiquitin-protein ligase toward GATOR1. In the presence of abundant amino acids, the GATOR2 complex mediates ubiquitination of components of the GATOR1 complex, leading to GATOR1 inactivation. This GATOR2 component is required for activating mTORC1 and promoting cell growth in both germline and somatic cells. In addition to its role in regulation of the mTORC1 complex, functions independently of mTORC1 to promote the acidification of lysosomes and facilitates autophagic flux. This Drosophila melanogaster (Fruit fly) protein is GATOR2 complex protein Wdr24.